Reading from the N-terminus, the 297-residue chain is MKLTHSFIKQQARLGLNFFRYLLARMNHDRVNVNAGYLAYITLLSMVPMLTVLLSILSSFALFANAGEVIQDFVITHFVPAAGEVVKTALIEFVANTGKMTAVGGAFLFVAAIMLISNIDKNLNYIWRVQQKRRAVFSFSMYWMILTLGPILVGASIAATSYITSLKILDNEALSGVYNLFLRWLPFVLSYCAFVGLYLLVPNKKVHWQHAMLGALIAAILFELSKKGFAAYITQFPSYQLIYGALAAIPILFVWVYLCWLIVLVGAEVTAALGEREHWSDSQDMLHFAPLPKNEKE.

The next 6 helical transmembrane spans lie at 43–63, 100–120, 135–155, 181–201, 213–233, and 245–265; these read LLSM…FALF, MTAV…SNID, AVFS…LVGA, FLRW…YLLV, LGAL…AAYI, and ALAA…IVLV.

It belongs to the UPF0761 family.

The protein resides in the cell inner membrane. The chain is UPF0761 membrane protein VC0395_A2314/VC395_2854 from Vibrio cholerae serotype O1 (strain ATCC 39541 / Classical Ogawa 395 / O395).